Here is a 286-residue protein sequence, read N- to C-terminus: MTIDISEASSSRFARIREGELDLQLHYNDLGEGAETVVMLHGSGPGASGWANFSRNLEPLLAAGYRVVLMDCPGWSKSDPIVCRSSRSDLNATALKGLLDMLGLERVHILGNSMGAHSAVAFALANPRRVGKLVLMGGGTGGASPFVPMPTEGIKLLNGLYREPTIDNLKKMMNVFVYDASDLTEELFQTRLDNMLSRHEHLDNFVESLAANPRQFPDFGSRLAEIQAPTLIVWGRNDRFVPMDAGLRLLAGIPNSSLHVFNNCGHWAQWEHAEPFNRLVLDFLQH.

Catalysis depends on His266, which acts as the Proton acceptor.

The protein belongs to the AB hydrolase superfamily. MhpC family. In terms of assembly, homodimer.

The catalysed reaction is (2Z,4E)-2-hydroxy-6-oxonona-2,4-dienedioate + H2O = (2Z)-2-hydroxypenta-2,4-dienoate + succinate + H(+). The enzyme catalyses (2Z,4E,7E)-2-hydroxy-6-oxonona-2,4,7-trienedioate + H2O = (2Z)-2-hydroxypenta-2,4-dienoate + fumarate + H(+). It functions in the pathway aromatic compound metabolism; 3-phenylpropanoate degradation. Functionally, catalyzes the cleavage of the C5-C6 bond of 2-hydroxy-6-oxononadienedioate and 2-hydroxy-6-oxononatrienedioate, a dienol ring fission product of the bacterial meta-cleavage pathway for degradation of phenylpropionic acid. This is 2-hydroxy-6-oxononadienedioate/2-hydroxy-6-oxononatrienedioate hydrolase 2 from Pseudomonas putida (Arthrobacter siderocapsulatus).